A 486-amino-acid polypeptide reads, in one-letter code: Cysteine--tRNA ligase (486 aa).

Cysteine 27 lines the Zn(2+) pocket. Positions 29 to 39 match the 'HIGH' region motif; it reads PTTYNFIHLGN. Cysteine 207, histidine 232, and glutamate 236 together coordinate Zn(2+). The 'KMSKS' region signature appears at 264 to 268; it reads KMSKS. ATP is bound at residue lysine 267.

This sequence belongs to the class-I aminoacyl-tRNA synthetase family. In terms of assembly, monomer. The cofactor is Zn(2+).

Its subcellular location is the cytoplasm. The catalysed reaction is tRNA(Cys) + L-cysteine + ATP = L-cysteinyl-tRNA(Cys) + AMP + diphosphate. The polypeptide is Cysteine--tRNA ligase (Desulforamulus reducens (strain ATCC BAA-1160 / DSM 100696 / MI-1) (Desulfotomaculum reducens)).